A 92-amino-acid chain; its full sequence is Cell division topological specificity factor (92 aa).

Belongs to the MinE family.

In terms of biological role, prevents the cell division inhibition by proteins MinC and MinD at internal division sites while permitting inhibition at polar sites. This ensures cell division at the proper site by restricting the formation of a division septum at the midpoint of the long axis of the cell. This Syntrophobacter fumaroxidans (strain DSM 10017 / MPOB) protein is Cell division topological specificity factor.